The following is a 368-amino-acid chain: G-protein coupled receptor 183-A (368 aa).

The Extracellular portion of the chain corresponds to 1–27; the sequence is METTSANFTQNDSNVCTNLYNHRGWAQ. N-linked (GlcNAc...) asparagine glycosylation is found at asparagine 7 and asparagine 11. Residues 28–53 form a helical membrane-spanning segment; the sequence is YFLPAMYSLICIVGLLGNVLALHVIW. Over 54–73 the chain is Cytoplasmic; that stretch reads PNLKKINSTTLYSANLVVSD. The chain crosses the membrane as a helical span at residues 74-91; sequence ILFSLALPLRVVYYARGF. Topologically, residues 92 to 101 are extracellular; it reads DWPMGEGLCK. An intrachain disulfide couples cysteine 100 to cysteine 178. A helical transmembrane segment spans residues 102–123; it reads AVALLFYINMYAGVNFMTCLSV. Residues 124–145 lie on the Cytoplasmic side of the membrane; sequence DRFIAVVLPLRFSRFRKVQKVR. A helical transmembrane segment spans residues 146–164; sequence YICGVVWVVVLMQTLPLLS. Topologically, residues 165–189 are extracellular; it reads MPMTNIEQSGHITCMEYPNFEKIDN. The helical transmembrane segment at 190-212 threads the bilayer; sequence LPVMLIGAVVLGFGIPVITILVC. Over 213 to 238 the chain is Cytoplasmic; sequence YTALCLKLRHLAKSNKLTEKSGRSSK. The helical transmembrane segment at 239–262 threads the bilayer; it reads AIGVICTVILVFVVCYSPYHVDLL. At 263–282 the chain is on the extracellular side; sequence QYMIKKLRYDPDCSELHKFQ. A helical membrane pass occupies residues 283 to 307; the sequence is ISLHITVCFMNLNSCLDPFIYFFAC. At 308–368 the chain is on the cytoplasmic side; it reads KGYKKKVLKL…SSVLLNSLEQ (61 aa).

The protein belongs to the G-protein coupled receptor 1 family.

It localises to the cell membrane. In terms of biological role, G-protein coupled receptor expressed in lymphocytes that acts as a chemotactic receptor for B-cells, T-cells, splenic dendritic cells, monocytes/macrophages and astrocytes. Receptor for oxysterol 7-alpha,25-dihydroxycholesterol (7-alpha,25-OHC) and other related oxysterols. Mediates cell positioning and movement of a number of cells by binding the 7-alpha,25-OHC ligand that forms a chemotactic gradient. Binding of 7-alpha,25-OHC mediates the correct localization of B-cells during humoral immune responses. The chain is G-protein coupled receptor 183-A (gpr183a) from Danio rerio (Zebrafish).